Here is a 171-residue protein sequence, read N- to C-terminus: Adenine phosphoribosyltransferase (171 aa).

This sequence belongs to the purine/pyrimidine phosphoribosyltransferase family. In terms of assembly, homodimer.

Its subcellular location is the cytoplasm. It carries out the reaction AMP + diphosphate = 5-phospho-alpha-D-ribose 1-diphosphate + adenine. Its pathway is purine metabolism; AMP biosynthesis via salvage pathway; AMP from adenine: step 1/1. Functionally, catalyzes a salvage reaction resulting in the formation of AMP, that is energically less costly than de novo synthesis. The polypeptide is Adenine phosphoribosyltransferase (Rhodospirillum centenum (strain ATCC 51521 / SW)).